Reading from the N-terminus, the 852-residue chain is DNA mismatch repair protein MutS (852 aa).

602–609 (GPNMSGKS) contacts ATP.

Belongs to the DNA mismatch repair MutS family.

This protein is involved in the repair of mismatches in DNA. It is possible that it carries out the mismatch recognition step. This protein has a weak ATPase activity. The chain is DNA mismatch repair protein MutS from Streptococcus thermophilus (strain ATCC BAA-491 / LMD-9).